The chain runs to 406 residues: LIM/homeobox protein Lhx2 (406 aa).

2 LIM zinc-binding domains span residues C53–D105 and C115–H168. Residues D250 to R270 are disordered. Positions T266–L325 form a DNA-binding region, homeobox. The Nuclear localization signal signature appears at K307 to R323. Residues Q328 to A356 show a composition bias toward polar residues. Disordered regions lie at residues Q328–T374 and G387–F406. A compositionally biased stretch (low complexity) spans S357–T374. Residues S396–F406 are compositionally biased toward polar residues.

Interacts (via LIM domains) with CITED2. Interacts with POU4F2.

The protein localises to the nucleus. Its function is as follows. Acts as a transcriptional activator. Stimulates the promoter of the alpha-glycoprotein gene. Transcriptional regulatory protein involved in the control of cell differentiation in developing lymphoid and neural cell types. The chain is LIM/homeobox protein Lhx2 (LHX2) from Homo sapiens (Human).